We begin with the raw amino-acid sequence, 477 residues long: MIFFDKLHQNISQNQSLLFVGLDPNPEMMPGRYSSQDIIDGLWDWLQFIIAETADFVCAYKPTLGFYEALGVPGLELLQKTLAAIPSHIPIILDAKHSDLNTSTIFAKTVFTQWGVDAITLSPYTGQDHVAPFLVYPDKAVFILCSTSNPGAEALQQYPTRESPLYLQVVQESKNWGTPEQLGLEVGTTNAEVLARIRQVAPERMIMVRSIWAEGGNLNRILEVGLNTDGNGLLIPVPQDMLASANLSKEIQSLRAEINQVRDITVRDVASCSVWLPDVFTVKQHPLHDLILQLYDIDCIMFGNFVQASGAVFPYYIDLRKIISNPQVFNQVLSGYENIVKNLTFDRLAGIPYGSLPTATGLALRLNCPMIFPRKEVKAHGTRRLIEGNFRTGEVVVVVDDILISGKSVMEGADKLKSAGLNVHDIVVFIDHEQGVKDKLQANGYRGHAVLTISEITSVLHQAGRINDEQFLALTAE.

Residues 1–273 (MIFFDKLHQN…ITVRDVASCS (273 aa)) are OMP decarboxylase. The Proton donor role is filled by K96. The interval 274 to 477 (VWLPDVFTVK…DEQFLALTAE (204 aa)) is orotate phosphoribosyltransferase. 5-phospho-alpha-D-ribose 1-diphosphate is bound by residues R374, K375, K378, H380, and 400–408 (DDILISGKS).

It in the N-terminal section; belongs to the OMP decarboxylase family. Type 2 subfamily. The protein in the C-terminal section; belongs to the purine/pyrimidine phosphoribosyltransferase family. Mg(2+) serves as cofactor.

The catalysed reaction is orotidine 5'-phosphate + H(+) = UMP + CO2. It catalyses the reaction orotidine 5'-phosphate + diphosphate = orotate + 5-phospho-alpha-D-ribose 1-diphosphate. Its pathway is pyrimidine metabolism; UMP biosynthesis via de novo pathway; UMP from orotate: step 1/2. It functions in the pathway pyrimidine metabolism; UMP biosynthesis via de novo pathway; UMP from orotate: step 2/2. Its function is as follows. Catalyzes the transfer of a ribosyl phosphate group from 5-phosphoribose 1-diphosphate to orotate, leading to the formation of orotidine monophosphate (OMP). Catalyzes the decarboxylation of orotidine monophosphate (OMP) to uridine monophosphate (UMP). This Nostoc sp. (strain PCC 7120 / SAG 25.82 / UTEX 2576) protein is Bifunctional enzyme PyrF/PyrE (pyrFE).